A 278-amino-acid chain; its full sequence is MEAPVTPYIWQYQPETGTAAGARQNYGAVINWLSSDNNMYHRVQEVNRQRNKIDDFREQTVRADMAHSFNDWKPQQLSQPASTAYLPAPNPIAGPRTIPDVIFTAEGEQLAGASPSLLSGGASLPPSSYRLGDGREYRKFTRDAMPFPHNWLVKENGVWVPVEERDPLLSEEGRNALSSYPTLTYAQPPILRYRRLGQQLQGGGVVAPSSRVVSLLTEQPRMPRTEGMTPYQFSAEFPPVVYDHPFSRNLTLFPKEFSPLFDPKDQVLATSLATLQYR.

Residues 114 to 199 (SPSLLSGGAS…ILRYRRLGQQ (86 aa)) constitute a propeptide that is removed on maturation.

The protein belongs to the adenoviridae hexon-linking protein family. Interacts with the peripentonal hexons as well as the hexons in the facets. Part of a complex composed of the core-capsid bridging protein, the endosome lysis protein VI and the hexon-linking protein VIII; these interactions bridge the virus core to the capsid. Cleaved by the viral protease during virion maturation. May cause the middle segment to be shed from the capsid.

Its subcellular location is the virion. The protein resides in the host nucleus. In terms of biological role, structural component of the virion that acts as a cement protein on the capsid interior and which glue the peripentonal hexons and group-of-nine hexons together. The sequence is that of Pre-hexon-linking protein VIII from Pantherophis guttatus (Corn snake).